The chain runs to 76 residues: MKEGIHPVYHETVIRCACGAEIPTGSTKKEIRVEICSKCHPFYTGKQKLVDSAGRIERFRRKYEKFQKKETPESTE.

Zn(2+) is bound by residues C16, C18, C36, and C39.

This sequence belongs to the bacterial ribosomal protein bL31 family. Type A subfamily. As to quaternary structure, part of the 50S ribosomal subunit. The cofactor is Zn(2+).

Binds the 23S rRNA. In Syntrophobacter fumaroxidans (strain DSM 10017 / MPOB), this protein is Large ribosomal subunit protein bL31.